We begin with the raw amino-acid sequence, 230 residues long: Orotidine 5'-phosphate decarboxylase (230 aa).

Substrate is bound by residues Asp11, Lys34, 61–70, Thr117, Arg179, Gln188, Gly208, and Arg209; that span reads DLKLHDIPNT. Residue Lys63 is the Proton donor of the active site.

This sequence belongs to the OMP decarboxylase family. Type 1 subfamily. In terms of assembly, homodimer.

The enzyme catalyses orotidine 5'-phosphate + H(+) = UMP + CO2. It participates in pyrimidine metabolism; UMP biosynthesis via de novo pathway; UMP from orotate: step 2/2. Its function is as follows. Catalyzes the decarboxylation of orotidine 5'-monophosphate (OMP) to uridine 5'-monophosphate (UMP). This is Orotidine 5'-phosphate decarboxylase from Streptococcus equi subsp. zooepidemicus (strain H70).